Consider the following 736-residue polypeptide: Poly(A) polymerase gamma (736 aa).

Lysine 2 is modified (N6-acetyllysine). 2 positions are modified to phosphoserine: serine 23 and serine 29. ATP contacts are provided by residues 99–101, threonine 108, 112–114, aspartate 166, lysine 227, tyrosine 236, and 245–246; these read FGS, DID, and GV. Residues aspartate 112, aspartate 114, and aspartate 166 each coordinate Mg(2+). The interval 506 to 564 is disordered; it reads KQSLSDVNRSSGGLQSKRLSLDSSCLDSSRDTDNGTPFNSPASKSDSPSVGETERNSAE. The segment covering 509–519 has biased composition (polar residues); sequence LSDVNRSSGGL. The segment covering 521–532 has biased composition (low complexity); sequence SKRLSLDSSCLD. Position 525 is a phosphoserine (serine 525). The span at 539–555 shows a compositional bias: polar residues; sequence NGTPFNSPASKSDSPSV. A phosphoserine mark is found at serine 599 and serine 648. Position 654 is a phosphothreonine (threonine 654). Basic and acidic residues predominate over residues 673–685; the sequence is DPRTAEERKRKSV. Residues 673-720 form a disordered region; the sequence is DPRTAEERKRKSVDAIGGESMPIPTIDTSRKKRLPSKELPDSSSPVPA. Phosphoserine is present on residues serine 684 and serine 708.

Belongs to the poly(A) polymerase family. Requires Mg(2+) as cofactor. It depends on Mn(2+) as a cofactor. Expressed predominantly in testis, and weakly in other tissues. Overexpressed in several tumors.

The protein resides in the nucleus. The catalysed reaction is RNA(n) + ATP = RNA(n)-3'-adenine ribonucleotide + diphosphate. Responsible for the post-transcriptional adenylation of the 3'-terminal of mRNA precursors and several small RNAs including signal recognition particle (SRP) RNA, nuclear 7SK RNA, U2 small nuclear RNA, and ribosomal 5S RNA. The sequence is that of Poly(A) polymerase gamma from Homo sapiens (Human).